A 274-amino-acid chain; its full sequence is Rhamnulose-1-phosphate aldolase (274 aa).

The active site involves Glu117. The Zn(2+) site is built by His141, His143, and His212.

The protein belongs to the aldolase class II family. RhaD subfamily. Homotetramer. It depends on Zn(2+) as a cofactor.

The protein localises to the cytoplasm. The catalysed reaction is L-rhamnulose 1-phosphate = (S)-lactaldehyde + dihydroxyacetone phosphate. It participates in carbohydrate degradation; L-rhamnose degradation; glycerone phosphate from L-rhamnose: step 3/3. Its function is as follows. Catalyzes the reversible cleavage of L-rhamnulose-1-phosphate to dihydroxyacetone phosphate (DHAP) and L-lactaldehyde. This Escherichia coli (strain SMS-3-5 / SECEC) protein is Rhamnulose-1-phosphate aldolase.